The chain runs to 336 residues: MALADRLLAAWYAGHPALALLRPLEALYRRVVTRKRARFLSGESASYRAPVPVIVVGNITIGGTGKTPMILWLIEHCRRQGLKVGVVSRGYGAEPPRLPWRVEAIQSAEQAGDEPLLIVQRTGVPLMIDPDRSRAVQALLASEPLDLILCDDGMQHYRLARDLELVLIDAARGLGNGRCLPAGPLREPAERLQEVDAVLFNGASADRPEGFAFHLQPSALVNLRTGERRALDFFPAGQRLHAVAGIGNPQRFFNTLLGLNWQPVPHPFADHAQFSAQSLAFSPSLPLVMTEKDAVKCRAFAADDWWYLAVEALPTPAFCGWFDSQLQRLLPGHRTP.

60 to 67 lines the ATP pocket; that stretch reads TIGGTGKT.

Belongs to the LpxK family.

The enzyme catalyses a lipid A disaccharide + ATP = a lipid IVA + ADP + H(+). The protein operates within glycolipid biosynthesis; lipid IV(A) biosynthesis; lipid IV(A) from (3R)-3-hydroxytetradecanoyl-[acyl-carrier-protein] and UDP-N-acetyl-alpha-D-glucosamine: step 6/6. Transfers the gamma-phosphate of ATP to the 4'-position of a tetraacyldisaccharide 1-phosphate intermediate (termed DS-1-P) to form tetraacyldisaccharide 1,4'-bis-phosphate (lipid IVA). This Pseudomonas putida (strain W619) protein is Tetraacyldisaccharide 4'-kinase.